Reading from the N-terminus, the 275-residue chain is Adaptin ear-binding coat-associated protein 1 (275 aa).

The tract at residues 166 to 190 (ITTKKGGTSKPKTAGTGGLSLLPPP) is disordered. Residues 167–179 (TTKKGGTSKPKTA) are compositionally biased toward low complexity. Residue T211 is modified to Phosphothreonine. Residues 215–275 (IPKSNHGGSD…APQPSNWVQF (61 aa)) form a disordered region. Short sequence motifs (WXXF motif) lie at residues 252 to 255 (WGDF) and 272 to 275 (WVQF). Over residues 256–275 (STASSSVPNQAPQPSNWVQF) the composition is skewed to polar residues.

Belongs to the NECAP family. In terms of assembly, interacts with AP1G1 and AP2A1 components of the adapter protein complexes AP-1 and AP-2. Interacts with the GAE domain proteins GGA1, GGA2 and GGA3.

The protein resides in the cytoplasmic vesicle. It is found in the clathrin-coated vesicle membrane. Its subcellular location is the cell membrane. Functionally, involved in endocytosis. In Bos taurus (Bovine), this protein is Adaptin ear-binding coat-associated protein 1 (NECAP1).